Reading from the N-terminus, the 463-residue chain is L-seryl-tRNA(Sec) selenium transferase (463 aa).

Lysine 295 is subject to N6-(pyridoxal phosphate)lysine.

This sequence belongs to the SelA family. Homodecamer; pentamer of dimers. Binds only one seryl-tRNA(Sec) per dimer. Pyridoxal 5'-phosphate is required as a cofactor.

The protein localises to the cytoplasm. It carries out the reaction L-seryl-tRNA(Sec) + selenophosphate + H(+) = L-selenocysteinyl-tRNA(Sec) + phosphate. It participates in aminoacyl-tRNA biosynthesis; selenocysteinyl-tRNA(Sec) biosynthesis; selenocysteinyl-tRNA(Sec) from L-seryl-tRNA(Sec) (bacterial route): step 1/1. Functionally, converts seryl-tRNA(Sec) to selenocysteinyl-tRNA(Sec) required for selenoprotein biosynthesis. The polypeptide is L-seryl-tRNA(Sec) selenium transferase (Escherichia coli O6:H1 (strain CFT073 / ATCC 700928 / UPEC)).